The following is a 111-amino-acid chain: N-alpha-acetyltransferase 38-B, NatC auxiliary subunit (111 aa).

A Sm domain is found at 28 to 106 (TARHKLESLL…IVSIQVELET (79 aa)).

The protein belongs to the snRNP Sm proteins family. Component of the N-terminal acetyltransferase C (NatC) complex, which is composed of naa35, naa38 and naa30.

It is found in the cytoplasm. Auxillary component of the N-terminal acetyltransferase C (NatC) complex which catalyzes acetylation of N-terminal methionine residues. The chain is N-alpha-acetyltransferase 38-B, NatC auxiliary subunit (naa38-b) from Xenopus laevis (African clawed frog).